Consider the following 391-residue polypeptide: ATP phosphoribosyltransferase regulatory subunit (391 aa).

It belongs to the class-II aminoacyl-tRNA synthetase family. HisZ subfamily. As to quaternary structure, heteromultimer composed of HisG and HisZ subunits.

The protein localises to the cytoplasm. The protein operates within amino-acid biosynthesis; L-histidine biosynthesis; L-histidine from 5-phospho-alpha-D-ribose 1-diphosphate: step 1/9. Its function is as follows. Required for the first step of histidine biosynthesis. May allow the feedback regulation of ATP phosphoribosyltransferase activity by histidine. The polypeptide is ATP phosphoribosyltransferase regulatory subunit (Prochlorococcus marinus (strain SARG / CCMP1375 / SS120)).